Reading from the N-terminus, the 207-residue chain is Holliday junction branch migration complex subunit RuvA (207 aa).

The interval 1 to 64 (MIGLISGQVQ…EDAQLLYGFI (64 aa)) is domain I. A domain II region spans residues 65-143 (DRKERDVFRQ…NIEVDNSNLE (79 aa)). The flexible linker stretch occupies residues 144-152 (FAIQPAPIS). The interval 153–207 (AEDSIIAEVEGALMSLGYKEKEAQQAIKAAKSNGETFADTQSLLKATLQQFQSFK) is domain III.

Belongs to the RuvA family. Homotetramer. Forms an RuvA(8)-RuvB(12)-Holliday junction (HJ) complex. HJ DNA is sandwiched between 2 RuvA tetramers; dsDNA enters through RuvA and exits via RuvB. An RuvB hexamer assembles on each DNA strand where it exits the tetramer. Each RuvB hexamer is contacted by two RuvA subunits (via domain III) on 2 adjacent RuvB subunits; this complex drives branch migration. In the full resolvosome a probable DNA-RuvA(4)-RuvB(12)-RuvC(2) complex forms which resolves the HJ.

It is found in the cytoplasm. Functionally, the RuvA-RuvB-RuvC complex processes Holliday junction (HJ) DNA during genetic recombination and DNA repair, while the RuvA-RuvB complex plays an important role in the rescue of blocked DNA replication forks via replication fork reversal (RFR). RuvA specifically binds to HJ cruciform DNA, conferring on it an open structure. The RuvB hexamer acts as an ATP-dependent pump, pulling dsDNA into and through the RuvAB complex. HJ branch migration allows RuvC to scan DNA until it finds its consensus sequence, where it cleaves and resolves the cruciform DNA. In Psychrobacter arcticus (strain DSM 17307 / VKM B-2377 / 273-4), this protein is Holliday junction branch migration complex subunit RuvA.